Here is a 112-residue protein sequence, read N- to C-terminus: UPF0482 protein SG1468 (112 aa).

The signal sequence occupies residues 1–22 (MNTIPTRCLLGGLLALSLLAYA).

It belongs to the UPF0482 family.

The protein is UPF0482 protein SG1468 of Sodalis glossinidius (strain morsitans).